A 385-amino-acid chain; its full sequence is S-adenosylmethionine synthase (385 aa).

Position 15 (histidine 15) interacts with ATP. A Mg(2+)-binding site is contributed by aspartate 17. Glutamate 43 is a binding site for K(+). L-methionine is bound by residues glutamate 56 and glutamine 99. Residues 99–109 (QSPDINQGVDR) form a flexible loop region. ATP is bound by residues 164–166 (DAK), 230–231 (RF), aspartate 239, 245–246 (RK), alanine 262, and lysine 266. L-methionine is bound at residue aspartate 239. Position 270 (lysine 270) interacts with L-methionine.

It belongs to the AdoMet synthase family. Homotetramer; dimer of dimers. The cofactor is Mg(2+). It depends on K(+) as a cofactor.

The protein resides in the cytoplasm. It carries out the reaction L-methionine + ATP + H2O = S-adenosyl-L-methionine + phosphate + diphosphate. It participates in amino-acid biosynthesis; S-adenosyl-L-methionine biosynthesis; S-adenosyl-L-methionine from L-methionine: step 1/1. In terms of biological role, catalyzes the formation of S-adenosylmethionine (AdoMet) from methionine and ATP. The overall synthetic reaction is composed of two sequential steps, AdoMet formation and the subsequent tripolyphosphate hydrolysis which occurs prior to release of AdoMet from the enzyme. The sequence is that of S-adenosylmethionine synthase from Sodalis glossinidius (strain morsitans).